Reading from the N-terminus, the 171-residue chain is Small ribosomal subunit protein uS5 (171 aa).

Residues 16-79 (LIEKIVFINR…ERARKDMALV (64 aa)) enclose the S5 DRBM domain.

The protein belongs to the universal ribosomal protein uS5 family. As to quaternary structure, part of the 30S ribosomal subunit. Contacts proteins S4 and S8.

Functionally, with S4 and S12 plays an important role in translational accuracy. In terms of biological role, located at the back of the 30S subunit body where it stabilizes the conformation of the head with respect to the body. The protein is Small ribosomal subunit protein uS5 of Desulfotalea psychrophila (strain LSv54 / DSM 12343).